We begin with the raw amino-acid sequence, 994 residues long: MSQWTPEYNELYTLKVDMKSEIPSDAPKTQESLKGILLHPEPIGAAKSFPAGVEMINSKVGNEFSHLCDDSQKQEKEMNGNQQEQEKSLVVRKKRKSQQAGPSYVQNCVKENQGILGLRQHLGTPSDEDNDSSFSDCLSSPSSSLHFGDSDTVTSDEDKEVSVRHSQTILNAKSRSHSARSHKWPRTETESVSGLLMKRPCLHGSSLRRLPCRKRFVKNNSSQRTQKQKERILMQRKKREVLARRKYALLPSSSSSSENDLSSESSSSSSTEGEEDLFVSASENHQNNPAVPSGSIDEDVVVIEASSTPQVTANEEINVTSTDSEVEIVTVGESYRSRSTLGHSRSHWSQGSSSHASRPQEPRNRSRISTVIQPLRQNAAEVVDLTVDEDEPTVVPTTSARMESQATSASINNSNPSTSEQASDTASAVTSSQPSTVSETSATLTSNSTTGTSIGDDSRRTTSSAVTETGPPAMPRLPSCCPQHSPCGGSSQNHHALGHPHTSCFQQHGHHFQHHHHHHHTPHPAVPVSPSFSDPACPVERPPQVQAPCGANSSSGTSYHEQQALPVDLSNSGIRSHGSGSFHGASAFDPCCPVSSSRAAIFGHQAAAAAPSQPLSSIDGYGSSMVAQPQPQPPPQPSLSSCRHYMPPPYASLTRPLHHQASACPHSHGNPPPQTQPPPQVDYVIPHPVHAFHSQISSHATSHPVAPPPPTHLASTAAPIPQHLPPTHQPISHHIPATAPPAQRLHPHEVMQRMEVQRRRMMQHPTRAHERPPPHPHRMHPNYGHGHHIHVPQTMSSHPRQAPERSAWELGIEAGVTAATYTPGALHPHLAHYHAPPRLHHLQLGALPLMVPDMAGYPHIRYISSGLDGTSFRGPFRGNFEELIHLEERLGNVNRGASQGTIERCTYPHKYKKVTTDWFSQRKLHCKQDGEEGTEEDTEEKCTICLSILEEGEDVRRLPCMHLFHQVCVDQWLITNKKCPICRVDIEAQLPSES.

Glycyl lysine isopeptide (Lys-Gly) (interchain with G-Cter in SUMO2) cross-links involve residues Lys-19, Lys-28, Lys-34, Lys-47, Lys-59, Lys-73, Lys-87, Lys-96, and Lys-110. A compositionally biased stretch (basic and acidic residues) spans 66–89 (HLCDDSQKQEKEMNGNQQEQEKSL). The tract at residues 66–106 (HLCDDSQKQEKEMNGNQQEQEKSLVVRKKRKSQQAGPSYVQ) is disordered. A disordered region spans residues 120–191 (QHLGTPSDED…HKWPRTETES (72 aa)). The segment covering 132–151 (SSFSDCLSSPSSSLHFGDSD) has biased composition (low complexity). A compositionally biased stretch (polar residues) spans 164-173 (RHSQTILNAK). A Glycyl lysine isopeptide (Lys-Gly) (interchain with G-Cter in SUMO2) cross-link involves residue Lys-173. Basic residues predominate over residues 174–184 (SRSHSARSHKW). Glycyl lysine isopeptide (Lys-Gly) (interchain with G-Cter in SUMO2) cross-links involve residues Lys-198 and Lys-218. The segment at 212-277 (CRKRFVKNNS…SSSTEGEEDL (66 aa)) is disordered. A compositionally biased stretch (basic residues) spans 234–247 (MQRKKREVLARRKY). The interaction with AXIN1 stretch occupies residues 241-404 (VLARRKYALL…VPTTSARMES (164 aa)). The segment covering 252–271 (SSSSSSENDLSSESSSSSST) has biased composition (low complexity). The SUMO interaction motif 1 (SIM) motif lies at 300 to 304 (VVVIE). The SUMO interaction motif 2 (SIM) signature appears at 325–331 (EVEIVTV). The segment at 337–371 (SRSTLGHSRSHWSQGSSSHASRPQEPRNRSRISTV) is disordered. Residues 347-357 (HWSQGSSSHAS) show a composition bias toward low complexity. An SUMO interaction motif 3 (SIM) motif is present at residues 382–386 (VVDLT). Disordered stretches follow at residues 388 to 476 (DEDE…AMPR), 508 to 537 (HGHH…DPAC), 610 to 684 (APSQ…VDYV), and 696 to 742 (ISSH…APPA). A compositionally biased stretch (polar residues) spans 395 to 467 (VPTTSARMES…SRRTTSSAVT (73 aa)). A compositionally biased stretch (basic residues) spans 508–522 (HGHHFQHHHHHHHTP). The segment covering 670–680 (NPPPQTQPPPQ) has biased composition (pro residues). The ubiquitin binding stretch occupies residues 907 to 909 (YPH). Glycyl lysine isopeptide (Lys-Gly) (interchain with G-Cter in SUMO2) cross-links involve residues Lys-923 and Lys-927. Cys-942 and Cys-945 together coordinate Zn(2+). The RING-type; atypical zinc finger occupies 942-983 (CTICLSILEEGEDVRRLPCMHLFHQVCVDQWLITNKKCPICR). Residues 957–961 (RLPCM) are ubiquitin binding. Positions 965 and 968 each coordinate Zn(2+).

The protein belongs to the Arkadia family. In terms of assembly, monomer. Interacts with SMAD6, SMAD7, AXIN1, AXIN2 and SKIL isoform SNON. Interacts with (phosphorylated) SMAD2 and SMAD3. Part of a complex containing RNF111, AXIN1 and SMAD7. Interacts (via SIM domains) with SUMO1 and SUMO2. In terms of tissue distribution, broadly expressed.

The protein resides in the nucleus. It localises to the cytoplasm. Its subcellular location is the PML body. The enzyme catalyses S-ubiquitinyl-[E2 ubiquitin-conjugating enzyme]-L-cysteine + [acceptor protein]-L-lysine = [E2 ubiquitin-conjugating enzyme]-L-cysteine + N(6)-ubiquitinyl-[acceptor protein]-L-lysine.. Its pathway is protein modification; protein ubiquitination. Binds free ubiquitin non-covalently via its RING-type zinc finger. Ubiquitin-binding leads to enhance the E3 ubiquitin-protein ligase activity by stabilizing the ubiquitin-conjugating enzyme E2 (donor ubiquitin) in the 'closed' conformation and activating ubiquitin transfer. Its function is as follows. E3 ubiquitin-protein ligase. Required for mesoderm patterning during embryonic development. Acts as an enhancer of the transcriptional responses of the SMAD2/SMAD3 effectors, which are activated downstream of BMP. Acts by mediating ubiquitination and degradation of SMAD inhibitors such as SMAD7, inducing their proteasomal degradation and thereby enhancing the transcriptional activity of TGF-beta and BMP. In addition to enhance transcription of SMAD2/SMAD3 effectors, also regulates their turnover by mediating their ubiquitination and subsequent degradation, coupling their activation with degradation, thereby ensuring that only effectors 'in use' are degraded. Activates SMAD3/SMAD4-dependent transcription by triggering signal-induced degradation of SNON isoform of SKIL. Associates with UBE2D2 as an E2 enzyme. Specifically binds polysumoylated chains via SUMO interaction motifs (SIMs) and mediates ubiquitination of sumoylated substrates. Catalyzes 'Lys-63'-linked ubiquitination of sumoylated XPC in response to UV irradiation, promoting nucleotide excision repair. Mediates ubiquitination and degradation of sumoylated PML. The regulation of the BMP-SMAD signaling is however independent of sumoylation and is not dependent of SUMO interaction motifs (SIMs). This chain is E3 ubiquitin-protein ligase Arkadia, found in Homo sapiens (Human).